The following is a 261-amino-acid chain: Proteasome assembly chaperone 2 (261 aa).

It belongs to the PSMG2 family. In terms of assembly, forms a heterodimer with psmg1. Degraded by the proteasome upon completion of 20S proteasome maturation.

It is found in the nucleus. Chaperone protein which promotes assembly of the 20S proteasome as part of a heterodimer with psmg1. This Xenopus tropicalis (Western clawed frog) protein is Proteasome assembly chaperone 2.